We begin with the raw amino-acid sequence, 117 residues long: Large ribosomal subunit protein bL20 (117 aa).

This sequence belongs to the bacterial ribosomal protein bL20 family.

In terms of biological role, binds directly to 23S ribosomal RNA and is necessary for the in vitro assembly process of the 50S ribosomal subunit. It is not involved in the protein synthesizing functions of that subunit. The polypeptide is Large ribosomal subunit protein bL20 (Leptospira biflexa serovar Patoc (strain Patoc 1 / Ames)).